A 306-amino-acid chain; its full sequence is Bifunctional protein FolD (306 aa).

Residues 164-166, S189, and T230 contribute to the NADP(+) site; that span reads GRS.

Belongs to the tetrahydrofolate dehydrogenase/cyclohydrolase family. In terms of assembly, homodimer.

It carries out the reaction (6R)-5,10-methylene-5,6,7,8-tetrahydrofolate + NADP(+) = (6R)-5,10-methenyltetrahydrofolate + NADPH. The catalysed reaction is (6R)-5,10-methenyltetrahydrofolate + H2O = (6R)-10-formyltetrahydrofolate + H(+). It participates in one-carbon metabolism; tetrahydrofolate interconversion. Catalyzes the oxidation of 5,10-methylenetetrahydrofolate to 5,10-methenyltetrahydrofolate and then the hydrolysis of 5,10-methenyltetrahydrofolate to 10-formyltetrahydrofolate. In Solibacter usitatus (strain Ellin6076), this protein is Bifunctional protein FolD.